Here is a 334-residue protein sequence, read N- to C-terminus: Type II methyltransferase M.NlaIII (334 aa).

The protein belongs to the N(4)/N(6)-methyltransferase family.

The catalysed reaction is a 2'-deoxyadenosine in DNA + S-adenosyl-L-methionine = an N(6)-methyl-2'-deoxyadenosine in DNA + S-adenosyl-L-homocysteine + H(+). In terms of biological role, a methylase, recognizes the double-stranded sequence 5'-CATG-3', methylates A-2 on both strands and protects the DNA from cleavage by the NlaIII endonuclease. The protein is Type II methyltransferase M.NlaIII (nlaIIIM) of Neisseria lactamica.